Here is a 384-residue protein sequence, read N- to C-terminus: Multidrug/solvent efflux pump periplasmic linker protein MepA (384 aa).

Positions 1 to 22 (MQFKPAVTALVSAVALATLLSG) are cleaved as a signal peptide. Cys-23 is lipidated: N-palmitoyl cysteine. Cys-23 carries S-diacylglycerol cysteine lipidation. A coiled-coil region spans residues 115–155 (LAERYKQLIDEQAVSKQEYDDANAKRLQAEASLKSAQIDLR). The interval 362-384 (ATNVKKPAGPDQANAAKADAKAE) is disordered. Residues 368-378 (PAGPDQANAAK) are compositionally biased toward low complexity.

It belongs to the membrane fusion protein (MFP) (TC 8.A.1) family.

Its subcellular location is the cell inner membrane. Functionally, the periplasmic linker protein component of an organic solvent and antibiotic efflux pump; confers resistance to toluene, hexane, p-xylene, ampicillin, penicillin G, erythromycin, novobiocin and tetracycline. The protein is Multidrug/solvent efflux pump periplasmic linker protein MepA (mepA) of Pseudomonas putida (Arthrobacter siderocapsulatus).